The sequence spans 199 residues: NAD(P)H dehydrogenase (quinone) (199 aa).

A Flavodoxin-like domain is found at valine 4–isoleucine 190. FMN is bound by residues serine 10–isoleucine 15 and threonine 78–phenylalanine 80. Tyrosine 12 provides a ligand contact to NAD(+). Tryptophan 98 provides a ligand contact to substrate. Residues serine 113–glycine 119 and histidine 134 contribute to the FMN site.

Belongs to the WrbA family. FMN serves as cofactor.

It catalyses the reaction a quinone + NADH + H(+) = a quinol + NAD(+). It carries out the reaction a quinone + NADPH + H(+) = a quinol + NADP(+). This is NAD(P)H dehydrogenase (quinone) from Rhodopseudomonas palustris (strain BisB5).